The primary structure comprises 398 residues: MGAKSMRSWCLCQICSCGSDYCPYEIVKQPRHVPEEYKPKQGKIDLGTTYKRDLNSYKVQPVAIVRPLERQVKKGKLDTVPTYKDDYRAWDLHKSELYKPEQTYHPPTVKFGNSTTFQDDFVPQEIKPRQSFKPSSVVKRSTAPFNGITSHRLDYIPHQLELKFERPKEVYKPTDQRFEDLTTHRCDFQGLIGETAKLCRPVHTRVTQNALFEGSTEFRESFQPWEIPPPEVKKVPEYVPPTGSMLLNSTSHLDYVPYQANHVVPIRPVSQKRSNNFPFQGKSIMKEDFPAWESCRQGLIKKQQQIPNPSGKFDGLSTFRSHYVPHELIPTESCKPLNIAFKSSVPFDDVTMYSVEYTPKRQEICPASYPSPPGYIFDNTNSQGHKFFRKIIPAVKAF.

Mn regions lie at residues 114 to 126, 148 to 162, 248 to 260, 282 to 296, 316 to 328, and 350 to 364; these read STTF…PQEI, ITSH…QLEL, NSTS…PYQA, KSIM…ESCR, LSTF…PHEL, and VTMY…RQEI.

This sequence belongs to the FAM154 family.

The polypeptide is Stabilizer of axonemal microtubules 2 (SAXO2) (Homo sapiens (Human)).